Consider the following 342-residue polypeptide: tRNA N6-adenosine threonylcarbamoyltransferase (342 aa).

Fe cation is bound by residues His-115 and His-119. Substrate is bound by residues 138–142 (IISGG), Asp-171, Gly-184, Asp-188, and Asn-276. Asp-304 is a Fe cation binding site.

This sequence belongs to the KAE1 / TsaD family. It depends on Fe(2+) as a cofactor.

The protein resides in the cytoplasm. It carries out the reaction L-threonylcarbamoyladenylate + adenosine(37) in tRNA = N(6)-L-threonylcarbamoyladenosine(37) in tRNA + AMP + H(+). Required for the formation of a threonylcarbamoyl group on adenosine at position 37 (t(6)A37) in tRNAs that read codons beginning with adenine. Is involved in the transfer of the threonylcarbamoyl moiety of threonylcarbamoyl-AMP (TC-AMP) to the N6 group of A37, together with TsaE and TsaB. TsaD likely plays a direct catalytic role in this reaction. This is tRNA N6-adenosine threonylcarbamoyltransferase from Endomicrobium trichonymphae.